The sequence spans 380 residues: Oocyte-specific homeobox protein 4 (380 aa).

Disordered stretches follow at residues 1–25, 43–95, 152–182, 234–303, and 339–380; these read MSKD…SFLV, VTPT…RKCR, KSSQ…FAAS, PRQK…CQTP, and TRSK…SSAY. Residues 43 to 53 show a composition bias toward polar residues; that stretch reads VTPTRPLQSSH. Over residues 54-67 the composition is skewed to basic and acidic residues; it reads SVHERDLHQKDSQE. Positions 94–153 form a DNA-binding region, homeobox; the sequence is CRKERTVYSKEQKCLLQEHFHQCQNPDLEQRKALALLIGVTEYKIQTWFKNRRAKECRKS. Positions 234 to 250 are enriched in basic and acidic residues; that stretch reads PRQKCRELSREPGHLSS. Residues 260 to 271 are compositionally biased toward low complexity; the sequence is SSPSPAAGAESS. Polar residues-rich tracts occupy residues 278–302 and 351–380; these read LSLS…MCQT and NTVQ…SSAY.

Belongs to the paired homeobox family. Obox subfamily. Specifically expressed in early embryos.

The protein resides in the nucleus. In terms of biological role, transcription factor required for zygotic genome activation (ZGA), a critical event in early embryonic development during which the developmental control passes from maternally provided mRNAs to the expression of the zygotic genome after fertilization. Cannot compensate for loss of other members of the Obox family, suggesting that its function differs from other Obox family members. May regulate expression of histone genes in embryonic stem cells. Also involved in completion of meiosis of oocytes during the meiosis-I/meiosis-II transition. Required to maintain the nuclear membrane of the germinal vesicle in oocytes. This is Oocyte-specific homeobox protein 4 from Mus musculus (Mouse).